A 118-amino-acid polypeptide reads, in one-letter code: Large ribosomal subunit protein bL20 (118 aa).

Belongs to the bacterial ribosomal protein bL20 family.

Functionally, binds directly to 23S ribosomal RNA and is necessary for the in vitro assembly process of the 50S ribosomal subunit. It is not involved in the protein synthesizing functions of that subunit. The polypeptide is Large ribosomal subunit protein bL20 (Bacillus anthracis (strain CDC 684 / NRRL 3495)).